The following is a 107-amino-acid chain: DNA-directed RNA polymerase subunit omega (107 aa).

The protein belongs to the RNA polymerase subunit omega family. As to quaternary structure, the RNAP catalytic core consists of 2 alpha, 1 beta, 1 beta' and 1 omega subunit. When a sigma factor is associated with the core the holoenzyme is formed, which can initiate transcription.

It catalyses the reaction RNA(n) + a ribonucleoside 5'-triphosphate = RNA(n+1) + diphosphate. Functionally, promotes RNA polymerase assembly. Latches the N- and C-terminal regions of the beta' subunit thereby facilitating its interaction with the beta and alpha subunits. This is DNA-directed RNA polymerase subunit omega from Mycolicibacterium smegmatis (strain ATCC 700084 / mc(2)155) (Mycobacterium smegmatis).